Here is a 372-residue protein sequence, read N- to C-terminus: tRNA-specific 2-thiouridylase MnmA (372 aa).

ATP contacts are provided by residues G16–S23 and M42. The segment at N102 to D104 is interaction with target base in tRNA. Residue C107 is the Nucleophile of the active site. C107 and C205 are oxidised to a cystine. G132 contributes to the ATP binding site. Residues K155–Q157 form an interaction with tRNA region. The active-site Cysteine persulfide intermediate is C205. Positions R317–Y318 are interaction with tRNA.

Belongs to the MnmA/TRMU family.

Its subcellular location is the cytoplasm. The enzyme catalyses S-sulfanyl-L-cysteinyl-[protein] + uridine(34) in tRNA + AH2 + ATP = 2-thiouridine(34) in tRNA + L-cysteinyl-[protein] + A + AMP + diphosphate + H(+). Functionally, catalyzes the 2-thiolation of uridine at the wobble position (U34) of tRNA, leading to the formation of s(2)U34. This chain is tRNA-specific 2-thiouridylase MnmA, found in Shewanella frigidimarina (strain NCIMB 400).